A 514-amino-acid chain; its full sequence is Glutathione-binding protein GsiB (514 aa).

An N-terminal signal peptide occupies residues 1 to 26 (MARAVHRSGLVALGIATALMASCAFA).

This sequence belongs to the bacterial solute-binding protein 5 family. As to quaternary structure, the complex is composed of two ATP-binding proteins (GsiA), two transmembrane proteins (GsiC and GsiD) and a solute-binding protein (GsiB).

Its subcellular location is the periplasm. Its function is as follows. Part of the ABC transporter complex GsiABCD involved in glutathione import. Binds glutathione. The polypeptide is Glutathione-binding protein GsiB (Shigella flexneri serotype 5b (strain 8401)).